A 201-amino-acid chain; its full sequence is ATP-dependent Clp protease proteolytic subunit (201 aa).

Catalysis depends on Ser-100, which acts as the Nucleophile. His-125 is a catalytic residue.

This sequence belongs to the peptidase S14 family. As to quaternary structure, component of the chloroplastic Clp protease core complex.

It is found in the plastid. The protein localises to the chloroplast stroma. The enzyme catalyses Hydrolysis of proteins to small peptides in the presence of ATP and magnesium. alpha-casein is the usual test substrate. In the absence of ATP, only oligopeptides shorter than five residues are hydrolyzed (such as succinyl-Leu-Tyr-|-NHMec, and Leu-Tyr-Leu-|-Tyr-Trp, in which cleavage of the -Tyr-|-Leu- and -Tyr-|-Trp bonds also occurs).. Its function is as follows. Cleaves peptides in various proteins in a process that requires ATP hydrolysis. Has a chymotrypsin-like activity. Plays a major role in the degradation of misfolded proteins. The sequence is that of ATP-dependent Clp protease proteolytic subunit from Chloranthus spicatus (Chulantree).